A 400-amino-acid polypeptide reads, in one-letter code: Dehydrogenase efuE (400 aa).

NAD(+) contacts are provided by residues 222-223 (AI), 303-305 (TAR), and D329. R305 is a catalytic residue. E334 is an active-site residue. The Proton donor role is filled by H352. 352 to 355 (HLGG) serves as a coordination point for NAD(+).

This sequence belongs to the D-isomer specific 2-hydroxyacid dehydrogenase family.

It functions in the pathway secondary metabolite biosynthesis; terpenoid biosynthesis. In terms of biological role, dehydrogenase; part of the gene cluster that mediates the biosynthesis of enfumafungin, a glycosylated fernene-type triterpenoid with potent antifungal activity, mediated by its interaction with beta-1,3-glucan synthase and the fungal cell wall. The pathway begins with the terpene cyclase-glycosyl transferase fusion protein that most likely uses 2,3-oxidosqualene as substrate and catalyzes glycosylation immediately after cyclization. The fernene glycoside then could be processed by the desaturase efuI which catalyzes isomerization of a double bond established by efuA to form the core structure. The latter would then undergo a series of hydroxylations in unknown order at C-2, C-19, C-23 and C-25, which would be catalyzed by two of the three cytochrome P450 monooxygenases efuB, efuG or efuH. The hydroxy-group at C-25 becomes oxidized by the dehydrogenase efuE to enable a spontaneous, non-enzymatic hemiacetal formation with C-23. After hydroxylation at C-2, acetylation by the acetyltransferase efuC takes place. The final steps in enfumafungin biosynthesis require expansion of the 5-membered ring by lactonization via a Baeyer-Villiger reaction mediated by one of the BGC's cytochrome P450 monooxygenases (efuB, efuG or efuH) followed by ring cleavage. This type of reaction would establish a double bond between C-20 and C-21 which could be reduced by the reductase efuL to form the final product. This is Dehydrogenase efuE from Hormonema carpetanum.